The following is a 401-amino-acid chain: Deoxyhypusine synthase-like protein (401 aa).

This sequence belongs to the deoxyhypusine synthase family.

This chain is Deoxyhypusine synthase-like protein, found in Thermosynechococcus vestitus (strain NIES-2133 / IAM M-273 / BP-1).